A 687-amino-acid chain; its full sequence is Complement C1s subcomponent (687 aa).

The signal sequence occupies residues 1–15 (MWCIVLLSLLAWVDA). In terms of domain architecture, CUB 1 spans 16–130 (EPTMYGEILS…TGFAAYYVAV (115 aa)). Ca(2+) is bound by residues Glu60, Asp68, Asp113, Asp131, Val132, and Glu134. Cys65 and Cys83 are joined by a disulfide. Residues 131-172 (DVNECTDFADSPCSHFCNNYIGGYFCSCPPEYFLHEDKKNCG) form the EGF-like; calcium-binding domain. Disulfide bonds link Cys135-Cys147, Cys143-Cys156, and Cys158-Cys171. Asn149, Tyr150, and Gly153 together coordinate Ca(2+). The residue at position 149 (Asn149) is a (3R)-3-hydroxyasparagine. N-linked (GlcNAc...) asparagine glycosylation occurs at Asn174. 9 disulfides stabilise this stretch: Cys175-Cys202, Cys234-Cys251, Cys294-Cys341, Cys321-Cys354, Cys359-Cys403, Cys386-Cys421, Cys425-Cys548, Cys594-Cys617, and Cys626-Cys658. Residues 175–290 (CSGDVFTTLI…KGWKFRYHGD (116 aa)) form the CUB 2 domain. Sushi domains are found at residues 292 to 356 (IPCP…RCQP) and 357 to 423 (VDCG…KCVP). N-linked (GlcNAc...) asparagine glycosylation occurs at Asn406. The 242-residue stretch at 438–679 (IFGGIITKIE…YIDWIRETMQ (242 aa)) folds into the Peptidase S1 domain. Active-site charge relay system residues include His475 and Asp528. The active-site Charge relay system is Ser630.

This sequence belongs to the peptidase S1 family. As to quaternary structure, C1 is a calcium-dependent trimolecular complex of C1q, C1r and C1s in the molar ration of 1:2:2. Activated C1s is an disulfide-linked heterodimer of a heavy chain and a light chain. In terms of processing, the iron and 2-oxoglutarate dependent 3-hydroxylation of aspartate and asparagine is (R) stereospecific within EGF domains.

The enzyme catalyses Cleavage of Arg-|-Ala bond in complement component C4 to form C4a and C4b, and Lys(or Arg)-|-Lys bond in complement component C2 to form C2a and C2b: the 'classical' pathway C3 convertase.. With respect to regulation, inhibited by SERPING1. In terms of biological role, C1s B chain is a serine protease that combines with C1q and C1r to form C1, the first component of the classical pathway of the complement system. C1r activates C1s so that it can, in turn, activate C2 and C4. Also cleaves IGFBP5 and thereby inhibits the trophic effects of IGF1. The protein is Complement C1s subcomponent of Sus scrofa (Pig).